Here is a 146-residue protein sequence, read N- to C-terminus: Large ribosomal subunit protein uL15 (146 aa).

Basic and acidic residues predominate over residues 1–13 (MKLNELHPSEGSR). The tract at residues 1–56 (MKLNELHPSEGSRHARKRVGRGTSSGFGKTSGRGQKGQHARSGGNTRLGFEGGQMP) is disordered. Positions 23 to 35 (TSSGFGKTSGRGQ) are enriched in gly residues.

It belongs to the universal ribosomal protein uL15 family. Part of the 50S ribosomal subunit.

Binds to the 23S rRNA. This is Large ribosomal subunit protein uL15 from Lactobacillus delbrueckii subsp. bulgaricus (strain ATCC 11842 / DSM 20081 / BCRC 10696 / JCM 1002 / NBRC 13953 / NCIMB 11778 / NCTC 12712 / WDCM 00102 / Lb 14).